A 78-amino-acid chain; its full sequence is Acyl carrier protein (78 aa).

In terms of domain architecture, Carrier spans 2-77; the sequence is SDTAERVKKI…DAVKFIDKAS (76 aa). An O-(pantetheine 4'-phosphoryl)serine modification is found at S37.

Belongs to the acyl carrier protein (ACP) family. Post-translationally, 4'-phosphopantetheine is transferred from CoA to a specific serine of apo-ACP by AcpS. This modification is essential for activity because fatty acids are bound in thioester linkage to the sulfhydryl of the prosthetic group.

Its subcellular location is the cytoplasm. It participates in lipid metabolism; fatty acid biosynthesis. In terms of biological role, carrier of the growing fatty acid chain in fatty acid biosynthesis. The chain is Acyl carrier protein from Brucella abortus (strain S19).